The primary structure comprises 3082 residues: Autotransporter adhesin BadA (3082 aa).

The N-terminal stretch at 1–47 (MKKLSVTSKRQYNLYASPISRRLSLLMKLSLETVTVMFLLGASPVLA) is a signal peptide. The interval 48-376 (SNLALTGAKN…DAVNVAQLKA (329 aa)) is binds to host cells. The interval 48-2901 (SNLALTGAKN…KVQDIATVAD (2854 aa)) is surface exposed passenger domain. The does not bind host cells, no host proangiogenic cytokine induction, collagen or fibronectin, no autoagglutination stretch occupies residues 53-2850 (TGAKNLSQNS…DARHNGVDSK (2798 aa)). A required to bind fibronectin, not required for surface expression on bacteria, bacterial autoagglutination, host cell binding, collagen binding or host proangiogenic cytokine induction region spans residues 470 to 2850 (ITGVAEGTDA…DARHNGVDSK (2381 aa)). The outer membrane translocation of the passenger domain stretch occupies residues 2902-3027 (SAVKYEKDST…VSNLRYYDIP (126 aa)). The next 4 membrane-spanning stretches (beta stranded) occupy residues 3028-3039 (GSLSLSFGTGIW), 3044-3051 (AFAIGAGY), 3055-3065 (DGNIRSNLSIT), and 3070-3082 (QWGV…LRLK). The interval 3028-3082 (GSLSLSFGTGIWRSQSAFAIGAGYTSEDGNIRSNLSITSSGGQWGVGAGITLRLK) is translocator domain.

Belongs to the autotransporter-2 (AT-2) (TC 1.B.40) family. Homotrimer. Crystals of the head region form trimers.

Its subcellular location is the cell surface. The protein localises to the cell outer membrane. Its function is as follows. Mediates bacterial adherence to host endothelial cells and host extracellular matrix proteins (collagen type I, III, IV, laminin and fibronectin). Static versus dynamic adherence results differ slightly; in dynamic adherence studies bacteria bind to fixed components under a constant defined flow rate to simulate in vivo infection conditions. Induces secretion of host proangiogenic cytokines such as VEGFA, ADM, IGFBP-3 and IL-8. May prevent bacterial phagocytosis by macrophages. Probably mediates bacterial autoagglutination. Negatively impacts type IV secretion system effectors (VirB/D4 T4SS and its substrate Bep proteins), possibly by preventing close association of host and bacterial cells. This implies the 2 factors are expressed at different times during infection. The polypeptide is Autotransporter adhesin BadA (Bartonella henselae (Rochalimaea henselae)).